Reading from the N-terminus, the 643-residue chain is Chromosomal replication initiator protein DnaA (643 aa).

The domain I, interacts with DnaA modulators stretch occupies residues 1-97 (MADVPADLAA…VDDSAGEPPP (97 aa)). The interval 87-303 (TVDDSAGEPP…ASGPGEPTAR (217 aa)) is disordered. The interval 97 to 302 (PAAPPAQQTP…PASGPGEPTA (206 aa)) is domain II. Polar residues predominate over residues 195 to 209 (SPSSQDAYGSPSQDY). Basic and acidic residues predominate over residues 222-269 (QRGDYDTPRAEYEPARPDYDSARPDYESARPEYDQRDPVRRELPEPPA). Residues 291–300 (PAPASGPGEP) are compositionally biased toward low complexity. A domain III, AAA+ region region spans residues 303 to 519 (RLNPKYLFDT…GALIRVTAFA (217 aa)). ATP is bound by residues Gly347, Gly349, Lys350, and Thr351. The segment at 520 to 643 (SLNRQPVDLG…TELTNRIKNG (124 aa)) is domain IV, binds dsDNA.

It belongs to the DnaA family. As to quaternary structure, oligomerizes as a right-handed, spiral filament on DNA at oriC.

The protein resides in the cytoplasm. Its function is as follows. Plays an essential role in the initiation and regulation of chromosomal replication. ATP-DnaA binds to the origin of replication (oriC) to initiate formation of the DNA replication initiation complex once per cell cycle. Binds the DnaA box (a 9 base pair repeat at the origin) and separates the double-stranded (ds)DNA. Forms a right-handed helical filament on oriC DNA; dsDNA binds to the exterior of the filament while single-stranded (ss)DNA is stabiized in the filament's interior. The ATP-DnaA-oriC complex binds and stabilizes one strand of the AT-rich DNA unwinding element (DUE), permitting loading of DNA polymerase. After initiation quickly degrades to an ADP-DnaA complex that is not apt for DNA replication. Binds acidic phospholipids. The chain is Chromosomal replication initiator protein DnaA from Streptomyces reticuli.